A 156-amino-acid chain; its full sequence is Ribosomal RNA large subunit methyltransferase H (156 aa).

Residues Leu-73, Gly-104, and 123–128 (LSALTL) contribute to the S-adenosyl-L-methionine site.

This sequence belongs to the RNA methyltransferase RlmH family. As to quaternary structure, homodimer.

It is found in the cytoplasm. It catalyses the reaction pseudouridine(1915) in 23S rRNA + S-adenosyl-L-methionine = N(3)-methylpseudouridine(1915) in 23S rRNA + S-adenosyl-L-homocysteine + H(+). In terms of biological role, specifically methylates the pseudouridine at position 1915 (m3Psi1915) in 23S rRNA. This chain is Ribosomal RNA large subunit methyltransferase H, found in Vibrio parahaemolyticus serotype O3:K6 (strain RIMD 2210633).